The primary structure comprises 517 residues: Anthranilate--CoA ligase (517 aa).

161 to 172 (LQYTSGSTGAPK) lines the AMP pocket.

The protein belongs to the ATP-dependent AMP-binding enzyme family. As to quaternary structure, monomer.

The enzyme catalyses anthranilate + ATP + CoA = anthraniloyl-CoA + AMP + diphosphate. Catalyzes the formation of anthraniloyl-CoA, which is the priming step for entry into the Pseudomonas quinolone signal (PQS) biosynthetic pathway. Also active on a variety of aromatic substrates, including benzoate and chloro and fluoro derivatives of anthranilate. This chain is Anthranilate--CoA ligase (pqsA), found in Pseudomonas aeruginosa (strain ATCC 15692 / DSM 22644 / CIP 104116 / JCM 14847 / LMG 12228 / 1C / PRS 101 / PAO1).